A 1750-amino-acid chain; its full sequence is Brefeldin A-inhibited guanine nucleotide-exchange protein 3 (1750 aa).

N-acetylalanine is present on alanine 2. Disordered regions lie at residues 44 to 65 (LRSP…IPGP) and 565 to 596 (EEGS…SSGN). Residues 47 to 61 (PENSSPVADSESGSS) show a composition bias toward polar residues. Residues 565–588 (EEGSHPVENGKGDGGHGGFERSDS) show a composition bias toward basic and acidic residues. Serine 586 is modified (phosphoserine). One can recognise an SEC7 domain in the interval 601-788 (AIEQRRAYKL…RALYERISRN (188 aa)). The active site involves glutamate 703. At serine 1307 the chain carries Phosphoserine.

As to quaternary structure, homodimer.

Its subcellular location is the cytoplasm. It localises to the cytosol. It is found in the membrane. Its activity is regulated as follows. Inhibited by brefeldin A. Its function is as follows. Activates the ARF proteins by exchanging bound GDP for free GTP. Plays a role in vesicular protein sorting. Involved both in the nuclear division phase and in the nuclear fusion phase. This chain is Brefeldin A-inhibited guanine nucleotide-exchange protein 3 (BIG3), found in Arabidopsis thaliana (Mouse-ear cress).